A 619-amino-acid polypeptide reads, in one-letter code: Mitochondrial Rho GTPase 1 (619 aa).

Topologically, residues 1 to 593 (MKKDVRILLV…TQADLKSSTF (593 aa)) are cytoplasmic. The 167-residue stretch at 2–168 (KKDVRILLVG…FYYAQKAVLH (167 aa)) folds into the Miro 1 domain. Residues Arg14, Gly16, Lys17, Thr18, and Ser19 each contribute to the GTP site. Residue Thr18 coordinates Mg(2+). Mg(2+)-binding residues include Pro35 and Asp57. GTP is bound by residues Ser59, Asn118, Lys119, Asp121, Ala149, and Lys150. EF-hand domains follow at residues 184–219 (ACIK…CFNT) and 304–339 (HAYL…FPYM). The Ca(2+) site is built by Asp197, Asp199, Asp201, Thr203, Glu208, Asp317, Asp319, Asp321, Ala323, and Glu328. Positions 417–580 (RNVFRCNVVG…FVKLTTMAMY (164 aa)) constitute a Miro 2 domain. Positions 429, 430, 431, 432, 433, 434, 448, 529, 531, 559, and 560 each coordinate GTP. Gly429 serves as a coordination point for Mg(2+). A helical; Anchor for type IV membrane protein membrane pass occupies residues 594–616 (WLRASFGATVFAFLGFAMYKALI). Over 617-619 (KQR) the chain is Mitochondrial intermembrane.

This sequence belongs to the mitochondrial Rho GTPase family. As to quaternary structure, homodimer.

Its subcellular location is the mitochondrion outer membrane. The enzyme catalyses GTP + H2O = GDP + phosphate + H(+). The catalysed reaction is ATP + H2O = ADP + phosphate + H(+). It catalyses the reaction UTP + H2O = UDP + phosphate + H(+). In terms of biological role, atypical mitochondrial nucleoside-triphosphatase (NTPase) involved in mitochondrial trafficking. Probably involved in control of anterograde transport of mitochondria and their subcellular distribution. Can hydrolyze GTP, ATP and UTP. This chain is Mitochondrial Rho GTPase 1 (RHOT1), found in Gallus gallus (Chicken).